A 571-amino-acid polypeptide reads, in one-letter code: Phosphoribosylaminoimidazole carboxylase (571 aa).

S37 is subject to Phosphoserine. The ATP-grasp domain occupies 110-298; the sequence is KEHLIKNGIA…QFEAHLRSIL (189 aa). Residue 138-193 participates in ATP binding; the sequence is GRDLGFPFVLKSRTLAYDGRGNFVVKNKEMIPEALEVLKDRPLYAEKWAPFTKELA.

The protein in the C-terminal section; belongs to the AIR carboxylase family. Class I subfamily.

It catalyses the reaction 5-amino-1-(5-phospho-D-ribosyl)imidazole-4-carboxylate + H(+) = 5-amino-1-(5-phospho-beta-D-ribosyl)imidazole + CO2. It functions in the pathway purine metabolism; IMP biosynthesis via de novo pathway; 5-amino-1-(5-phospho-D-ribosyl)imidazole-4-carboxylate from 5-amino-1-(5-phospho-D-ribosyl)imidazole (carboxylase route): step 1/1. The polypeptide is Phosphoribosylaminoimidazole carboxylase (ADE2) (Saccharomyces cerevisiae (strain ATCC 204508 / S288c) (Baker's yeast)).